The sequence spans 246 residues: Probable transcriptional regulatory protein YebC (246 aa).

A disordered region spans residues 1–20 (MAGHSKWANTRHRKAAQDAK).

It belongs to the TACO1 family.

It localises to the cytoplasm. In Salmonella choleraesuis (strain SC-B67), this protein is Probable transcriptional regulatory protein YebC.